Consider the following 1100-residue polypeptide: Guanylate cyclase 2G (1100 aa).

The signal sequence occupies residues 1-43 (MASRTRSESPLEPRLYAGAGSRADHPSLVLMLSVVMLVTCLEA). Residues 44-481 (AKLTVGFHAP…VAGMTVTVTA (438 aa)) lie on the Extracellular side of the membrane. 9 N-linked (GlcNAc...) asparagine glycosylation sites follow: Asn55, Asn85, Asn94, Asn217, Asn225, Asn238, Asn418, Asn440, and Asn443. A helical membrane pass occupies residues 482-502 (VIPTVTFLVLASAAAITGLML). Topologically, residues 503 to 1100 (WRLRGKVQSH…EEEAKVSEIL (598 aa)) are cytoplasmic. One can recognise a Protein kinase domain in the interval 546-837 (SDTSTVKASA…EASPRGHVSI (292 aa)). The Guanylate cyclase domain occupies 901 to 1031 (TIFFSDIVGF…DTVNMASRME (131 aa)).

Belongs to the adenylyl cyclase class-4/guanylyl cyclase family. Homooligomer. In vitro interacts with NPR1/GC-A. N-glycosylated. Highly expressed in testis.

It is found in the cell membrane. It catalyses the reaction GTP = 3',5'-cyclic GMP + diphosphate. The sequence is that of Guanylate cyclase 2G (Gucy2g) from Mus musculus (Mouse).